A 368-amino-acid polypeptide reads, in one-letter code: MAGCVARRALAVGSRWWSRSLATTRGSRPLCAVGGAGGLPPVATATTRRHLSSRNRAEGKVLETVGVFEVPKQNGKYETGQLFLHSVFGYRGVVLFPWQARLYDRDVASATPEKAENPAGHGSKEVKGKTHTYYQVLIDARDCPHISQRSQTEAVTFLANHDDSRALYAIPGLDYVSHEDILPYTSTDQVPIQHELFERFLLYDQTKAPPFVARETLRAWQEKNHPWLELSDVHRETTENIRVTVIPFYMGMREAQNSHVYWWRYCIRLENLDSDVVQLRERHWRIFSLSGTLETVRGRGVVGREPVLSKEQPAFQYSSHVSLQASSGHMWGTFRFERPDGSHFDVRIPPFSLESNKDEKTPPSGLHW.

The N-terminal 21 residues, 1-21 (MAGCVARRALAVGSRWWSRSL), are a transit peptide targeting the mitochondrion. The ApaG domain maps to 235 to 360 (RETTENIRVT…FSLESNKDEK (126 aa)). Thr-292 is subject to Phosphothreonine.

Interacts with PCNA and POLD2. Interacts with SSBP1. Interacts with PRIMPOL; leading to enhance DNA polymerase activity of PRIMPOL. Interacts with POLH. Interacts with POLD1; leading to stimulate DNA polymerase activity of POLD1.

It is found in the mitochondrion matrix. The protein localises to the nucleus. Its function is as follows. Involved in DNA damage tolerance by regulating translesion synthesis (TLS) of templates carrying DNA damage lesions such as 8oxoG and abasic sites. May act by stimulating activity of DNA polymerases involved in TLS, such as PRIMPOL and polymerase delta (POLD1). This chain is Polymerase delta-interacting protein 2, found in Mus musculus (Mouse).